The sequence spans 687 residues: DNA ligase (687 aa).

Residues 34–38 (DAEYD), 83–84 (SL), and Glu117 each bind NAD(+). Lys119 acts as the N6-AMP-lysine intermediate in catalysis. Positions 140, 182, 298, and 322 each coordinate NAD(+). Positions 416, 419, 434, and 439 each coordinate Zn(2+). The BRCT domain maps to 609-687 (EARGPFAGKT…EEEFVRLLKE (79 aa)).

The protein belongs to the NAD-dependent DNA ligase family. LigA subfamily. Mg(2+) is required as a cofactor. It depends on Mn(2+) as a cofactor.

The enzyme catalyses NAD(+) + (deoxyribonucleotide)n-3'-hydroxyl + 5'-phospho-(deoxyribonucleotide)m = (deoxyribonucleotide)n+m + AMP + beta-nicotinamide D-nucleotide.. Functionally, DNA ligase that catalyzes the formation of phosphodiester linkages between 5'-phosphoryl and 3'-hydroxyl groups in double-stranded DNA using NAD as a coenzyme and as the energy source for the reaction. It is essential for DNA replication and repair of damaged DNA. This chain is DNA ligase, found in Anaeromyxobacter dehalogenans (strain 2CP-1 / ATCC BAA-258).